Reading from the N-terminus, the 213-residue chain is Uridine kinase (213 aa).

Residue 15–22 (GASASGKS) participates in ATP binding.

The protein belongs to the uridine kinase family.

The protein resides in the cytoplasm. The catalysed reaction is uridine + ATP = UMP + ADP + H(+). It carries out the reaction cytidine + ATP = CMP + ADP + H(+). It participates in pyrimidine metabolism; CTP biosynthesis via salvage pathway; CTP from cytidine: step 1/3. Its pathway is pyrimidine metabolism; UMP biosynthesis via salvage pathway; UMP from uridine: step 1/1. This Escherichia coli O157:H7 protein is Uridine kinase.